The chain runs to 120 residues: Large ribosomal subunit protein bL20 (120 aa).

Belongs to the bacterial ribosomal protein bL20 family.

Binds directly to 23S ribosomal RNA and is necessary for the in vitro assembly process of the 50S ribosomal subunit. It is not involved in the protein synthesizing functions of that subunit. The protein is Large ribosomal subunit protein bL20 of Paracidovorax citrulli (strain AAC00-1) (Acidovorax citrulli).